Consider the following 667-residue polypeptide: Transketolase 2 (667 aa).

Histidine 25 is a binding site for substrate. Residues histidine 65 and 113–115 (GPL) each bind thiamine diphosphate. Aspartate 154 lines the Mg(2+) pocket. Positions 155 and 184 each coordinate thiamine diphosphate. 2 residues coordinate Mg(2+): asparagine 184 and isoleucine 186. Histidine 260 lines the substrate pocket. A thiamine diphosphate-binding site is contributed by histidine 260. An N6-acetyllysine modification is found at lysine 342. Substrate-binding residues include arginine 357 and serine 384. Glutamate 410 acts as the Proton donor in catalysis. Phenylalanine 436 contributes to the thiamine diphosphate binding site. 3 residues coordinate substrate: histidine 460, aspartate 468, and arginine 519.

This sequence belongs to the transketolase family. As to quaternary structure, homodimer. Mg(2+) serves as cofactor. The cofactor is Ca(2+). It depends on Mn(2+) as a cofactor. Co(2+) is required as a cofactor. Requires thiamine diphosphate as cofactor.

The catalysed reaction is D-sedoheptulose 7-phosphate + D-glyceraldehyde 3-phosphate = aldehydo-D-ribose 5-phosphate + D-xylulose 5-phosphate. Functionally, catalyzes the reversible transfer of a two-carbon ketol group from sedoheptulose-7-phosphate to glyceraldehyde-3-phosphate, producing xylulose-5-phosphate and ribose-5-phosphate. Catalyzes the transfer of a two-carbon ketol group from a ketose donor to an aldose acceptor, via a covalent intermediate with the cofactor thiamine pyrophosphate. This chain is Transketolase 2, found in Escherichia coli (strain K12).